A 292-amino-acid chain; its full sequence is Phosphoenolpyruvate guanylyltransferase (292 aa).

Phosphoenolpyruvate contacts are provided by threonine 168, glycine 184, and serine 187. Residues 243 to 292 are disordered; that stretch reads PLVAEDSGGSGGESGTSAESGLSVPPGIVGGTQRRIVSDASGPGRAKKYP.

Belongs to the CofC family.

It catalyses the reaction phosphoenolpyruvate + GTP + H(+) = enolpyruvoyl-2-diphospho-5'-guanosine + diphosphate. It functions in the pathway cofactor biosynthesis; coenzyme F420 biosynthesis. In terms of biological role, guanylyltransferase that catalyzes the activation of phosphoenolpyruvate (PEP) as enolpyruvoyl-2-diphospho-5'-guanosine, via the condensation of PEP with GTP. It is involved in the biosynthesis of coenzyme F420, a hydride carrier cofactor. This is Phosphoenolpyruvate guanylyltransferase from Frankia casuarinae (strain DSM 45818 / CECT 9043 / HFP020203 / CcI3).